We begin with the raw amino-acid sequence, 265 residues long: Leucyl/phenylalanyl-tRNA--protein transferase (265 aa).

The tract at residues 244 to 265 (LDTGPDPASSSVTEISLRPAAP) is disordered.

The protein belongs to the L/F-transferase family.

It localises to the cytoplasm. The catalysed reaction is N-terminal L-lysyl-[protein] + L-leucyl-tRNA(Leu) = N-terminal L-leucyl-L-lysyl-[protein] + tRNA(Leu) + H(+). The enzyme catalyses N-terminal L-arginyl-[protein] + L-leucyl-tRNA(Leu) = N-terminal L-leucyl-L-arginyl-[protein] + tRNA(Leu) + H(+). It carries out the reaction L-phenylalanyl-tRNA(Phe) + an N-terminal L-alpha-aminoacyl-[protein] = an N-terminal L-phenylalanyl-L-alpha-aminoacyl-[protein] + tRNA(Phe). Functionally, functions in the N-end rule pathway of protein degradation where it conjugates Leu, Phe and, less efficiently, Met from aminoacyl-tRNAs to the N-termini of proteins containing an N-terminal arginine or lysine. The polypeptide is Leucyl/phenylalanyl-tRNA--protein transferase (Methylibium petroleiphilum (strain ATCC BAA-1232 / LMG 22953 / PM1)).